Reading from the N-terminus, the 515-residue chain is Maturase K (515 aa).

Belongs to the intron maturase 2 family. MatK subfamily.

The protein resides in the plastid. It localises to the chloroplast. In terms of biological role, usually encoded in the trnK tRNA gene intron. Probably assists in splicing its own and other chloroplast group II introns. The protein is Maturase K of Pinus elliottii (Slash pine).